Consider the following 148-residue polypeptide: MRGKRMNHITVSGLVATEPRSFLTAEGVHITSFRLAAQDRHFSRNANSWVSGDTNWFTVTGFRALGSNAAESISKGDRVIVYGRLRLRTWGDNKMAVEIEAESFGHDLRWGTSVFSKRFYQLPEASDNLRTKYDVDEAETPEIHAKAA.

The 103-residue stretch at 6–108 folds into the SSB domain; it reads MNHITVSGLV…IEAESFGHDL (103 aa).

In terms of assembly, homotetramer.

The polypeptide is Single-stranded DNA-binding protein 2 (ssb2) (Tropheryma whipplei (strain TW08/27) (Whipple's bacillus)).